The primary structure comprises 341 residues: NADH-quinone oxidoreductase subunit H 2 (341 aa).

The next 8 helical transmembrane spans lie at 13 to 33 (IVVI…IAYI), 82 to 102 (GVFL…WAVI), 115 to 135 (VGVL…IMAG), 161 to 181 (IGFV…TAIV), 190 to 210 (VLGW…VSAL), 242 to 262 (LFVL…TILF), 277 to 297 (WVPG…MFAM), and 317 to 337 (VFLP…QFAG).

Belongs to the complex I subunit 1 family. In terms of assembly, NDH-1 is composed of 14 different subunits. Subunits NuoA, H, J, K, L, M, N constitute the membrane sector of the complex.

The protein resides in the cell inner membrane. The catalysed reaction is a quinone + NADH + 5 H(+)(in) = a quinol + NAD(+) + 4 H(+)(out). Its function is as follows. NDH-1 shuttles electrons from NADH, via FMN and iron-sulfur (Fe-S) centers, to quinones in the respiratory chain. The immediate electron acceptor for the enzyme in this species is believed to be ubiquinone. Couples the redox reaction to proton translocation (for every two electrons transferred, four hydrogen ions are translocated across the cytoplasmic membrane), and thus conserves the redox energy in a proton gradient. This subunit may bind ubiquinone. The protein is NADH-quinone oxidoreductase subunit H 2 of Rhodopseudomonas palustris (strain HaA2).